The primary structure comprises 2946 residues: MASEKPGPGPGLEPQPVGLIAVGAAGGGGGGSGGGGTGGSGMGELRGASGSGSVMLPAGMINPSVPIRNIRMKFAVLIGLIQVGEVSNRDIVETVLNLLVGGEFDLEMNFIIQDAESITCMTELLEHCDVTCQAEIWSMFTAILRKSVRNLQTSTEVGLIEQVLLKMSAVDDMIADLLVDMLGVLASYSITVKELKLLFSMLRGESGIWPRHAVKLLSVLNQMPQRHGPDTFFNFPGCSAAAIALPPIAKWPYQNGFTLNTWFRMDPLNNINVDKDKPYLYCFRTSKGVGYSAHFVGNCLIVTSLKSKGKGFQHCVKYDFQPRKWYMISIVHIYNRWRNSEIRCYVNGQLVSYGDMAWHVNTNDSYDKCFLGSSETADANRVFCGQLGAVYVFSEALNPAQIFAIHQLGPGYKSTFKFKSESDIHLAEHHKQVLYDGKLASSIAFTYNAKATDAQLCLESSPKENASIFVHSPHALMLQDVKAIVTHSIHSAIHSIGGIQVLFPLFAQLDNRQLNDSQVETTVCATLLAFLVELLKSSVAMQEQMLGGKGFLVIGYLLEKSSRVHITRAVLEQFLSFAKYLDGLSHGAPLLKQLCDHILFNPAIWIHTPAKVQLSLYTYLSAEFIGTATIYTTIRRVGTVLQLMHTLKYYYWVINPADSSGITPKGLDGPRPSQKEIISLRAFMLLFLKQLILKDRGVKEDELQSILNYLLTMHEDENIHDVLQLLVALMSEHPASMIPAFDQRNGIRVIYKLLASKSESIWVQALKVLGYFLKHLGHKRKVEIMHTHSLFTLLGERLMLHTNTVTVTTYNTLYEILTEQVCTQVVHKPHPEPDSTVKIQNPMILKVVATLLKNSTPSAELMEVRRLFLSDMIKLFSNSRENRRCLLQCSVWQDWMFSLGYINPKNSEEQKITEMVYNIFRILLYHAIKYEWGGWRVWVDTLSIAHSKVTYEAHKEYLAKMYEEYQRQEEENIKKGKKGNVSTISGLSSQTTGAKGGMEIREIEDLSQSQSPESETDYPVSTDTRDLLMSTKVSDDILGNSDRPGSGVHVEVHDLLVDIKAEKVEATEVKLDDMDLSPETLVGGENGALVEVESLLDNVYSAAVEKLQNNVHGSVGIIKKNEEKDNGPLITLADEKEDLPNSSTSFLFDKIPKQEEKLLPELSSNHIIPNIQDTQVHLGVSDDLGLLAHMTGSVDLTCTSSIIEEKEFKIHTTSDGMSSISERDLASSTKGLEYAEMTATTLETESSSSKIVPNIDAGSIISDTERSDDGKESGKEIRKIQTTTTTQAVQGRSITQQDRDLRVDLGFRGMPMTEEQRRQFSPGPRTTMFRIPEFKWSPMHQRLLTDLLFALETDVHVWRSHSTKSVMDFVNSNENIIFVHNTIHLISQMVDNIIIACGGILPLLSAATSPTGSKTELENIEVTQGMSAETAVTFLSRLMAMVDVLVFASSLNFSEIEAEKNMSSGGLMRQCLRLVCCVAVRNCLECRQRQRDRGNKSSHGSSKPQEVPQSVTATAASKTPLENVPGNLSPIKDPDRLLQDVDINRLRAVVFRDVDDSKQAQFLALAVVYFISVLMVSKYRDILEPQRETTRTGSQPGRNIRQEINSPTSTVVVIPSIPHPSLNHGFLAKLIPEQSFGHSFYKETPAAFPDTIKEKETPTPGEDIQVESSIPHTDSGIGEEQVASILNGAELETSTGPDAMSELLSTLSSEVKKSQESLTENPSETLKPATSISSISQTKGINVKEILKSLVAAPVEIAECGPEPIPYPDPALKRETQAILPMQFHSFDRSVVVPVKKPPPGSLAVTTVGATTAGSGLPTGSTSNIFAATGATPKSMINTTGAVDSGSSSSSSSSSFVNGATSKNLPAVQTVAPMPEDSAENMSITAKLERALEKVAPLLREIFVDFAPFLSRTLLGSHGQELLIEGLVCMKSSTSVVELVMLLCSQEWQNSIQKNAGLAFIELINEGRLLCHAMKDHIVRVANEAEFILNRQRAEDVHKHAEFESQCAQYAADRREEEKMCDHLISAAKHRDHVTANQLKQKILNILTNKHGAWGAVSHSQLHDFWRLDYWEDDLRRRRRFVRNAFGSTHAEALLKAAIEYGTEEDVVKSKKTFRSQAIVNQNAETELMLEGDDDAVSLLQEKEIDNLAGPVVLSTPAQLIAPVVVAKGTLSITTTEIYFEVDEDDSAFKKIDTKVLAYTEGLHGKWMFSEIRAVFSRRYLLQNTALEVFMANRTSVMFNFPDQATVKKVVYSLPRVGVGTSYGLPQARRISLATPRQLYKSSNMTQRWQRREISNFEYLMFLNTIAGRTYNDLNQYPVFPWVLTNYESEELDLTLPGNFRDLSKPIGALNPKRAVFYAERYETWEDDQSPPYHYNTHYSTATSTLSWLVRIEPFTTFFLNANDGKFDHPDRTFSSVARSWRTSQRDTSDVKELIPEFYYLPEMFVNSNGYNLGVREDEVVVNDVDLPPWAKKPEDFVRINRMALESEFVSCQLHQWIDLIFGYKQRGPEAVRALNVFHYLTYEGSVNLDSITDPVLREAMEAQIQNFGQTPSQLLIEPHPPRSSAMHLCFLPQSPLMFKDQMQQDVIMVLKFPSNSPVTHVAANTLPHLTIPAVVTVTCSRLFAVNRWHNTVGLRGAPGYSLDQAHHLPIEMDPLIANNSGVNKRQITDLVDQSIQINAHCFVVTADNRYILICGFWDKSFRVYSTETGKLTQIVFGHWDVVTCLARSESYIGGDCYIVSGSRDATLLLWYWSGRHHIIGDNPNSSDYPAPRAVLTGHDHEVVCVSVCAELGLVISGAKEGPCLVHTITGDLLRALEGPENCLFPRLISVSSEGHCIIYYERGRFSNFSINGKLLAQMEINDSTRAILLSSDGQNLVTGGDNGVVEVWQACDFKQLYIYPGCDAGIRAMDLSHDQRTLITGMASGSIVAFNIDFNRWHYEHQNRY.

The disordered stretch occupies residues 971 to 995; the sequence is ENIKKGKKGNVSTISGLSSQTTGAK. The span at 980 to 993 shows a compositional bias: polar residues; it reads NVSTISGLSSQTTG. 2 positions are modified to phosphoserine: Ser-1011 and Ser-1014. The WD 1 repeat unit spans residues 1326-1368; that stretch reads TTMFRIPEFKWSPMHQRLLTDLLFALETDVHVWRSHSTKSVMD. Disordered stretches follow at residues 1490-1531, 1651-1675, 1711-1731, and 1841-1860; these read QRDR…LSPI, TIKE…HTDS, VKKS…PATS, and GAVD…VNGA. The span at 1497-1517 shows a compositional bias: polar residues; it reads SSHGSSKPQEVPQSVTATAAS. Ser-1529 bears the Phosphoserine mark. Phosphoserine occurs at positions 1714 and 1717. Residues 1716-1731 show a composition bias toward polar residues; that stretch reads ESLTENPSETLKPATS. Low complexity predominate over residues 1845-1855; that stretch reads SGSSSSSSSSS. Ser-2138 carries the phosphoserine modification. The 109-residue stretch at 2147–2255 folds into the BEACH-type PH domain; that stretch reads NLAGPVVLST…TVKKVVYSLP (109 aa). One can recognise a BEACH domain in the interval 2274 to 2563; that stretch reads ATPRQLYKSS…QLLIEPHPPR (290 aa). Ser-2575 is modified (phosphoserine). WD repeat units follow at residues 2718–2761, 2778–2818, 2860–2899, and 2902–2941; these read GHWD…HIIG, GHDH…RALE, EIND…QLYI, and GCDA…WHYE.

The protein belongs to the WD repeat neurobeachin family. As to quaternary structure, interacts with RII subunit of PKA. As to expression, predominant in many brain structures. Also expressed at medium levels in spleen, thymus, prostate, testis and ovary. Low level expression is seen in heart, kidney, pancreas, skeletal muscle and intestine.

The protein localises to the cytoplasm. It localises to the membrane. Binds to type II regulatory subunits of protein kinase A and anchors/targets them to the membrane. May anchor the kinase to cytoskeletal and/or organelle-associated proteins. This Homo sapiens (Human) protein is Neurobeachin.